Reading from the N-terminus, the 65-residue chain is Sperm protamine P1 (65 aa).

The segment at 1–65 is disordered; the sequence is MARYRHSRSR…RYSRRRRRRY (65 aa).

This sequence belongs to the protamine P1 family. Testis.

It localises to the nucleus. It is found in the chromosome. Functionally, protamines substitute for histones in the chromatin of sperm during the haploid phase of spermatogenesis. They compact sperm DNA into a highly condensed, stable and inactive complex. This chain is Sperm protamine P1 (PRM1), found in Lagorchestes hirsutus (Rufous hare-wallaby).